Consider the following 884-residue polypeptide: Valine--tRNA ligase (884 aa).

Residues 46–56 carry the 'HIGH' region motif; sequence PNVTGKLHLGH. The 'KMSKS' region motif lies at 520 to 524; that stretch reads KMSKS. Lys-523 is a binding site for ATP. The stretch at 809–844 forms a coiled coil; sequence LADLLNVEEELARLEKELAKWQKELNMVGKKLSNER.

Belongs to the class-I aminoacyl-tRNA synthetase family. ValS type 1 subfamily. In terms of assembly, monomer.

It is found in the cytoplasm. It carries out the reaction tRNA(Val) + L-valine + ATP = L-valyl-tRNA(Val) + AMP + diphosphate. Its function is as follows. Catalyzes the attachment of valine to tRNA(Val). As ValRS can inadvertently accommodate and process structurally similar amino acids such as threonine, to avoid such errors, it has a 'posttransfer' editing activity that hydrolyzes mischarged Thr-tRNA(Val) in a tRNA-dependent manner. This Streptococcus agalactiae serotype III (strain NEM316) protein is Valine--tRNA ligase.